The sequence spans 707 residues: Choline transporter-like protein 4 (707 aa).

The Cytoplasmic portion of the chain corresponds to 1–32 (MGKKQKENEAYGNSAKYDPSFRGPIKNRGCTD). The helical transmembrane segment at 33–53 (IICCVLFLVFILGYIVVGLVA) threads the bilayer. The Extracellular segment spans residues 54–227 (WVYGDPRQVL…KIFEDFAQSW (174 aa)). N-linked (GlcNAc...) asparagine glycosylation is found at Asn67, Asn185, Asn195, and Asn196. A helical transmembrane segment spans residues 228 to 248 (YWILVALGVALVLSLLFILLL). Residues 249-250 (RL) are Cytoplasmic-facing. A helical membrane pass occupies residues 251–271 (VAAPLVLLLIVGVLAVLAYGI). The Extracellular portion of the chain corresponds to 272 to 307 (YHCWQQYRELRDQGVSITQLGFTANLSAYQNVKETW). N-linked (GlcNAc...) asparagine glycosylation occurs at Asn296. Residues 308–328 (LAALIILAVLEGVLLLMLIFL) traverse the membrane as a helical segment. Residues 329-356 (RQRIRIAIALLKEASRAVGQMMSTMFYP) are Cytoplasmic-facing. A helical transmembrane segment spans residues 357–377 (LVTFVLLVICIGYWAVTALYL). At 378-452 (ATSGQPQYVY…GILGLFWTVN (75 aa)) the chain is on the extracellular side. N-linked (GlcNAc...) asparagine glycans are attached at residues Asn391, Asn403, and Asn413. A helical transmembrane segment spans residues 453–473 (WVLALGQCVLAGAFASFYWAF). The Cytoplasmic segment spans residues 474–498 (HKPRDIPTFPLSSAFIRTLRYHTGS). Residues 499 to 519 (LAFGALILTLVQIARVILEYI) traverse the membrane as a helical segment. Topologically, residues 520-557 (DHKLRGSQNPVARCIICCFKCCLWCLEKFIKFLNRNAY) are extracellular. Residues 558–578 (IMIAIYGKNFCVSAKNAFMLL) traverse the membrane as a helical segment. Over 579-594 (MRNVVRVVVLDKVTDL) the chain is Cytoplasmic. The helical transmembrane segment at 595 to 615 (LLFFGKLLVVGGVGVLSFFFF) threads the bilayer. Residues 616 to 635 (SGRIKGLGKDFKNPDLNYYW) are Extracellular-facing. Residues 636-656 (LPIMTSIMGAYVIASGFFSVF) traverse the membrane as a helical segment. Topologically, residues 657 to 707 (GMCVDTLFLCFLEDLERNDGSQERPYYMPKALLKILGKKNEVPTGGKNRKK) are cytoplasmic.

This sequence belongs to the CTL (choline transporter-like) family. Post-translationally, N-glycosylated; N-glycosylation of Asn-67 and Asn-391 is required for a proper thiamine pyrophosphate uptake. As to expression, highly expressed in intestine, kidney and stomach. Also expressed in testis and lung.

It localises to the membrane. The protein localises to the apical cell membrane. The enzyme catalyses choline(out) + n H(+)(in) = choline(in) + n H(+)(out). It catalyses the reaction thiamine diphosphate(out) = thiamine diphosphate(in). Choline transporter that plays a role in the choline-acetylcholine system and is required to the efferent innervation of hair cells in the olivocochlear bundle for the maintenance of physiological function of outer hair cells and the protection of hair cells from acoustic injury. Also described as a thiamine pyrophosphate transporter in colon, may mediate the absorption of microbiota-generated thiamine pyrophosphate and contribute to host thiamine (vitamin B1) homeostasis. This chain is Choline transporter-like protein 4, found in Rattus norvegicus (Rat).